We begin with the raw amino-acid sequence, 552 residues long: Urocanate hydratase (552 aa).

NAD(+) contacts are provided by residues 49–50 (GG), Q127, 173–175 (GMG), D193, 239–240 (NA), 260–264 (QTSAH), 270–271 (YI), and Y319. C407 is an active-site residue. G489 contributes to the NAD(+) binding site.

This sequence belongs to the urocanase family. NAD(+) serves as cofactor.

It localises to the cytoplasm. The enzyme catalyses 4-imidazolone-5-propanoate = trans-urocanate + H2O. The protein operates within amino-acid degradation; L-histidine degradation into L-glutamate; N-formimidoyl-L-glutamate from L-histidine: step 2/3. Catalyzes the conversion of urocanate to 4-imidazolone-5-propionate. In Bacillus cereus (strain G9842), this protein is Urocanate hydratase.